Reading from the N-terminus, the 122-residue chain is Large ribosomal subunit protein uL14 (122 aa).

The protein belongs to the universal ribosomal protein uL14 family. In terms of assembly, part of the 50S ribosomal subunit. Forms a cluster with proteins L3 and L19. In the 70S ribosome, L14 and L19 interact and together make contacts with the 16S rRNA in bridges B5 and B8.

Its function is as follows. Binds to 23S rRNA. Forms part of two intersubunit bridges in the 70S ribosome. This Halalkalibacterium halodurans (strain ATCC BAA-125 / DSM 18197 / FERM 7344 / JCM 9153 / C-125) (Bacillus halodurans) protein is Large ribosomal subunit protein uL14.